Here is a 300-residue protein sequence, read N- to C-terminus: MRHFLTLRDCSVDEIHQLLRRATELRDMHRAGHLHQPLQGRVLGMVFEKSSTRTRVSFEAGMAQLGGHALFLSPRDTQLGRGEPVEDTARVVSRMVDAVMIRTFGHDMLERFAGHSAAPVINGLSDLCHPCQLLADLQTFTEHRGPITDRRVAWIGDGNNMCHSWIEAAGLLGFDLHIAAPPGYRPEADILALGGDRVQVFDDAYAAAEGADLVTTDVWASMGQESEQAAREEAFRGFCVTESLMECAGEQALFMHCLPAHRGEEVEAAVLEGPQSVVWDEAENRLHAQKALLEFLMLGY.

Carbamoyl phosphate is bound by residues 51-54, Q78, R102, and 129-132; these read STRT and HPCQ. L-ornithine-binding positions include N160, D217, and 221 to 222; that span reads SM. Carbamoyl phosphate is bound by residues 257-258 and R285; that span reads CL.

This sequence belongs to the aspartate/ornithine carbamoyltransferase superfamily. OTCase family.

It localises to the cytoplasm. The catalysed reaction is carbamoyl phosphate + L-ornithine = L-citrulline + phosphate + H(+). It participates in amino-acid biosynthesis; L-arginine biosynthesis; L-arginine from L-ornithine and carbamoyl phosphate: step 1/3. In terms of biological role, reversibly catalyzes the transfer of the carbamoyl group from carbamoyl phosphate (CP) to the N(epsilon) atom of ornithine (ORN) to produce L-citrulline. The protein is Ornithine carbamoyltransferase of Halorhodospira halophila (strain DSM 244 / SL1) (Ectothiorhodospira halophila (strain DSM 244 / SL1)).